Consider the following 475-residue polypeptide: Ribulose bisphosphate carboxylase large chain (475 aa).

Residues 1 to 2 (MS) constitute a propeptide that is removed on maturation. Residue proline 3 is modified to N-acetylproline. Asparagine 123 and threonine 173 together coordinate substrate. Residue lysine 175 is the Proton acceptor of the active site. Lysine 177 contacts substrate. Mg(2+) is bound by residues lysine 201, aspartate 203, and glutamate 204. Lysine 201 is subject to N6-carboxylysine. The active-site Proton acceptor is the histidine 294. The substrate site is built by arginine 295, histidine 327, and serine 379.

Belongs to the RuBisCO large chain family. Type I subfamily. As to quaternary structure, heterohexadecamer of 8 large chains and 8 small chains; disulfide-linked. The disulfide link is formed within the large subunit homodimers. The cofactor is Mg(2+). In terms of processing, the disulfide bond which can form in the large chain dimeric partners within the hexadecamer appears to be associated with oxidative stress and protein turnover.

It is found in the plastid. The protein localises to the chloroplast. It carries out the reaction 2 (2R)-3-phosphoglycerate + 2 H(+) = D-ribulose 1,5-bisphosphate + CO2 + H2O. It catalyses the reaction D-ribulose 1,5-bisphosphate + O2 = 2-phosphoglycolate + (2R)-3-phosphoglycerate + 2 H(+). Its function is as follows. RuBisCO catalyzes two reactions: the carboxylation of D-ribulose 1,5-bisphosphate, the primary event in carbon dioxide fixation, as well as the oxidative fragmentation of the pentose substrate in the photorespiration process. Both reactions occur simultaneously and in competition at the same active site. This chain is Ribulose bisphosphate carboxylase large chain, found in Welwitschia mirabilis (Tree tumbo).